The chain runs to 244 residues: Myrosinase MB1 (244 aa).

N32 is a glycosylation site (N-linked (GlcNAc...) asparagine). Y51 contributes to the substrate binding site. Catalysis depends on E125, which acts as the Nucleophile. Residues W173 and E180–F181 each bind substrate. Residue N216 is glycosylated (N-linked (GlcNAc...) asparagine).

It belongs to the glycosyl hydrolase 1 family. As to quaternary structure, homodimer. In vacuoles called myrosin grains of a certain class of cells, myrosin cells, distributed in the cotyledons and the axis of the embryo as well as in different organs of the growing plant.

Its subcellular location is the vacuole. It carries out the reaction a thioglucoside + H2O = a sugar + a thiol.. Its function is as follows. Degradation of glucosinolates (glucose residue linked by a thioglucoside bound to an amino acid derivative) to glucose, sulfate and any of the products: thiocyanates, isothiocyanates, nitriles, epithionitriles or oxazolidine-2-thiones. In Sinapis alba (White mustard), this protein is Myrosinase MB1.